A 53-amino-acid chain; its full sequence is MFRWGIIFLVIALIAAALGFGGLAGTAAWAAKLVFVVGIVLFLVSLFTGRRRP.

2 helical membrane passes run 4–24 and 27–47; these read WGII…GGLA and AAWA…VSLF.

It belongs to the UPF0391 family.

It is found in the cell membrane. This Enterobacter sp. (strain 638) protein is UPF0391 membrane protein Ent638_0536.